The sequence spans 299 residues: MRLVFMGTPAFSVPVLDALVAAGHEVAAVYCQPPRPAGRGKKPRPSPVQARAEVLGLAVRHPVSLKGAEAQADFAALGAEIAVVVAYGLILPQAVLDAPEHGCWNIHASLLPRWRGAAPIHRAILAGDAETGVCIMQMEAGLDTGPVLLREAVAIGAEETTGGLHDRLSALGARLIVEALARRAELVPEPQPEVGVTYAAKIDKAEARVDWSRPAVEVDRLIRGLSPVPGAWCEIAGERVKLLGSRLAEGSGAAGQVLEGFTLACGVGAVEITRAQRAGRKAADAAEILRGMTLPARLD.

109 to 112 lines the (6S)-5,6,7,8-tetrahydrofolate pocket; the sequence is SLLP.

It belongs to the Fmt family.

The catalysed reaction is L-methionyl-tRNA(fMet) + (6R)-10-formyltetrahydrofolate = N-formyl-L-methionyl-tRNA(fMet) + (6S)-5,6,7,8-tetrahydrofolate + H(+). Attaches a formyl group to the free amino group of methionyl-tRNA(fMet). The formyl group appears to play a dual role in the initiator identity of N-formylmethionyl-tRNA by promoting its recognition by IF2 and preventing the misappropriation of this tRNA by the elongation apparatus. The sequence is that of Methionyl-tRNA formyltransferase from Dinoroseobacter shibae (strain DSM 16493 / NCIMB 14021 / DFL 12).